A 446-amino-acid polypeptide reads, in one-letter code: N-succinylarginine dihydrolase (446 aa).

Substrate is bound by residues 19 to 28, asparagine 110, and 137 to 138; these read AGLSFGNVAS and HR. Glutamate 174 is a catalytic residue. Arginine 213 is a substrate binding site. Residue histidine 249 is part of the active site. 2 residues coordinate substrate: aspartate 251 and asparagine 364. The Nucleophile role is filled by cysteine 370.

The protein belongs to the succinylarginine dihydrolase family. In terms of assembly, homodimer.

It catalyses the reaction N(2)-succinyl-L-arginine + 2 H2O + 2 H(+) = N(2)-succinyl-L-ornithine + 2 NH4(+) + CO2. The protein operates within amino-acid degradation; L-arginine degradation via AST pathway; L-glutamate and succinate from L-arginine: step 2/5. In terms of biological role, catalyzes the hydrolysis of N(2)-succinylarginine into N(2)-succinylornithine, ammonia and CO(2). The sequence is that of N-succinylarginine dihydrolase from Burkholderia cenocepacia (strain HI2424).